The primary structure comprises 165 residues: MVDDSTRKTLSNIPLLQIRAGPREKDIWVQRLKEEYQALIKYVENNKQSGSDWFRLESNKEGTKWFGKCWYMHNLLKYEFDVEFDIPVTYPTTAPEIALPELDGKTAKMYRGGKICLTDHFKPLWARNVPKFGIAHAMALGLAPWLAVEIPDLIEKGVITYKDNC.

Catalysis depends on C116, which acts as the Glycyl thioester intermediate.

Belongs to the ubiquitin-conjugating enzyme family. UFC1 subfamily.

E2-like enzyme which forms an intermediate with UFM1 via a thioester linkage. The protein is Ubiquitin-fold modifier-conjugating enzyme 1 of Drosophila virilis (Fruit fly).